A 185-amino-acid chain; its full sequence is Thymidine kinase (185 aa).

17 to 24 (GPMFAGKT) is an ATP binding site. Glu92 (proton acceptor) is an active-site residue. Residue Phe121 coordinates substrate. Cys146 and Cys149 together coordinate Zn(2+). 166–170 (LILAG) contacts substrate. Zn(2+)-binding residues include Cys179 and Cys182.

It belongs to the thymidine kinase family.

The catalysed reaction is thymidine + ATP = dTMP + ADP + H(+). Functionally, phosphorylates thymidine. ASFV replicates in the cytoplasm of infected cells and contains genes encoding a number of enzymes needed for DNA synthesis, including thymidine kinase. Important for growth in swine macrophages in vitro and is a virus virulence factor in swine. The polypeptide is Thymidine kinase (African swine fever virus (isolate Pig/Kenya/KEN-50/1950) (ASFV)).